A 229-amino-acid chain; its full sequence is Large ribosomal subunit protein uL1 (229 aa).

Belongs to the universal ribosomal protein uL1 family. Part of the 50S ribosomal subunit.

Its function is as follows. Binds directly to 23S rRNA. The L1 stalk is quite mobile in the ribosome, and is involved in E site tRNA release. Functionally, protein L1 is also a translational repressor protein, it controls the translation of the L11 operon by binding to its mRNA. This Haemophilus influenzae (strain PittEE) protein is Large ribosomal subunit protein uL1.